Consider the following 196-residue polypeptide: Protein GrpE (196 aa).

The disordered stretch occupies residues 1-41 (MSSKEQKTPEGQAPEEIITEQHDDVEAVEPEVSAEQVDPRD).

Belongs to the GrpE family. As to quaternary structure, homodimer.

Its subcellular location is the cytoplasm. In terms of biological role, participates actively in the response to hyperosmotic and heat shock by preventing the aggregation of stress-denatured proteins, in association with DnaK and GrpE. It is the nucleotide exchange factor for DnaK and may function as a thermosensor. Unfolded proteins bind initially to DnaJ; upon interaction with the DnaJ-bound protein, DnaK hydrolyzes its bound ATP, resulting in the formation of a stable complex. GrpE releases ADP from DnaK; ATP binding to DnaK triggers the release of the substrate protein, thus completing the reaction cycle. Several rounds of ATP-dependent interactions between DnaJ, DnaK and GrpE are required for fully efficient folding. This is Protein GrpE from Klebsiella pneumoniae subsp. pneumoniae (strain ATCC 700721 / MGH 78578).